The following is a 2234-amino-acid chain: RNA-directed RNA polymerase L (2234 aa).

Residues 26 to 283 form an endonuclease region; that stretch reads ITVVTSQTEM…INLSDEKLSC (258 aa). Positions 51, 89, and 102 each coordinate Mn(2+). Residue Lys115 is part of the active site. Basic and acidic residues predominate over residues 879–891; sequence KRDDHMKDSEDSK. Disordered stretches follow at residues 879 to 898 and 927 to 949; these read KRDD…SSDL and KLKE…QQKR. A compositionally biased stretch (polar residues) spans 935–945; sequence RQSSSGSSLKN. The 200-residue stretch at 1184–1383 folds into the RdRp catalytic domain; sequence MEMKMSVNLG…FISSKFNKFV (200 aa). Asp1342 is a binding site for Mg(2+).

It belongs to the Bunyavirales RNA polymerase family. In terms of assembly, homomultimer; the oligomeric structure is essential for the polymerase activity. Interacts with nucleoprotein N. Interacts with protein Z; this interaction inhibits viral transcription and replication, Z partially blocks the product exit tunnel for the releasing nascent RNA product. Requires Mn(2+) as cofactor. Mg(2+) serves as cofactor.

It is found in the virion. The protein localises to the host cytoplasm. It carries out the reaction RNA(n) + a ribonucleoside 5'-triphosphate = RNA(n+1) + diphosphate. Its function is as follows. RNA-dependent RNA polymerase, which is responsible for the replication and transcription of the viral RNA genome using antigenomic RNA as an intermediate. During transcription, synthesizes subgenomic RNAs and assures their capping by a cap-snatching mechanism, which involves the endonuclease activity cleaving the host capped pre-mRNAs. These short capped RNAs are then used as primers for viral transcription. The 3'-end of subgenomic mRNAs molecules are heterogeneous and not polyadenylated. The replicase function is to direct synthesis of antigenomic and genomic RNA which are encapsidated and non capped. As a consequence of the use of the same enzyme for both transcription and replication, these mechanisms need to be well coordinated. These processes may be regulated by proteins N and Z in a dose-dependent manner. Z protein inhibits the viral polymerase L und thus the viral transcription and RNA synthesis. This is RNA-directed RNA polymerase L from Bolomys (OLVV).